We begin with the raw amino-acid sequence, 1043 residues long: Unconventional myosin-Ia (1043 aa).

The Myosin motor domain maps to 8 to 694; it reads VGVEDLILLE…TLFYLEEQRR (687 aa). Position 101–108 (101–108) interacts with ATP; sequence GESGAGKT. The segment at 571–593 is actin-binding; it reads VAVLMKNLYSKNPNYIRCIKPND. IQ domains follow at residues 697–719, 720–742, and 743–772; these read LQQLATLIQKVYRGWRCRTHYQQ, MRKSQILISAWFRGNKQKKHYGK, and IRSSVLLIQAFVRGWRARKNYRKYFRSGAA. The region spanning 858–1042 is the TH1 domain; that stretch reads KASYPQSVPI…KGSNAMEVTV (185 aa).

This sequence belongs to the TRAFAC class myosin-kinesin ATPase superfamily. Myosin family. Post-translationally, phosphorylated by ALPK1.

Involved in directing the movement of organelles along actin filaments. The protein is Unconventional myosin-Ia (Myo1a) of Mus musculus (Mouse).